Here is a 932-residue protein sequence, read N- to C-terminus: Alanine--tRNA ligase, mitochondrial (932 aa).

Residues 458-480 (SRLTWNTSSSSSDQTTQQTTQLP) are disordered. Residues 464-478 (TSSSSSDQTTQQTTQ) show a composition bias toward low complexity. Zn(2+)-binding residues include H610, H614, C713, and H717.

The protein belongs to the class-II aminoacyl-tRNA synthetase family. As to quaternary structure, monomer. Requires Zn(2+) as cofactor.

It is found in the mitochondrion. The catalysed reaction is tRNA(Ala) + L-alanine + ATP = L-alanyl-tRNA(Ala) + AMP + diphosphate. Its function is as follows. Catalyzes the attachment of alanine to tRNA(Ala) in a two-step reaction: alanine is first activated by ATP to form Ala-AMP and then transferred to the acceptor end of tRNA(Ala). Also edits incorrectly charged tRNA(Ala) via its editing domain. This Dictyostelium discoideum (Social amoeba) protein is Alanine--tRNA ligase, mitochondrial (malaS).